Consider the following 660-residue polypeptide: Acetyl-coenzyme A synthetase (660 aa).

CoA-binding positions include 197–200 and Thr-317; that span reads RGGK. Residues 397-399, 421-426, Asp-512, and Arg-528 each bind ATP; these read GEP and DTWWQT. Residue Ser-536 coordinates CoA. Residue Arg-539 coordinates ATP. Mg(2+) is bound by residues Val-550, His-552, and Val-555. The residue at position 625 (Lys-625) is an N6-acetyllysine.

The protein belongs to the ATP-dependent AMP-binding enzyme family. It depends on Mg(2+) as a cofactor. Acetylated. Deacetylation by the SIR2-homolog deacetylase activates the enzyme.

It carries out the reaction acetate + ATP + CoA = acetyl-CoA + AMP + diphosphate. In terms of biological role, catalyzes the conversion of acetate into acetyl-CoA (AcCoA), an essential intermediate at the junction of anabolic and catabolic pathways. AcsA undergoes a two-step reaction. In the first half reaction, AcsA combines acetate with ATP to form acetyl-adenylate (AcAMP) intermediate. In the second half reaction, it can then transfer the acetyl group from AcAMP to the sulfhydryl group of CoA, forming the product AcCoA. In Burkholderia mallei (strain NCTC 10247), this protein is Acetyl-coenzyme A synthetase.